Consider the following 246-residue polypeptide: MSQIESQNPEPVFQLKGSMLAITVMELARTNLEALDRQLAAKVAQAPNFFSNTPLILALDKLAPNEGPVDLPGLVRICRQHGLRTLAIRANRIEDIAAAIAVDLPVLPPSGARERVIDPIEVEAPKKIPEKPPEPLIKPTRVITAPVRGGQQIYAQGGDLVVVAPVSPGAELLADGNIHVYGPMRGRALAGIKGDTKARIFCQQLSAELISIAGQYKVSEDLRRDPLWGSPVQVSLSGDVLNIIRL.

The protein belongs to the MinC family. As to quaternary structure, interacts with MinD and FtsZ.

Functionally, cell division inhibitor that blocks the formation of polar Z ring septums. Rapidly oscillates between the poles of the cell to destabilize FtsZ filaments that have formed before they mature into polar Z rings. Prevents FtsZ polymerization. This is Probable septum site-determining protein MinC from Pseudomonas savastanoi pv. phaseolicola (strain 1448A / Race 6) (Pseudomonas syringae pv. phaseolicola (strain 1448A / Race 6)).